Reading from the N-terminus, the 1477-residue chain is Neurexin-1 (1477 aa).

The signal sequence occupies residues 1–30; sequence MGTALLQRGGCFLLCLSLLLLGCWAELGSG. Positions 31–217 constitute a Laminin G-like 1 domain; the sequence is LEFPGAEGQW…PPNSGGGSPC (187 aa). Residues 31–1401 are Extracellular-facing; sequence LEFPGAEGQW…EVIRESSSTT (1371 aa). N-linked (GlcNAc...) asparagine glycosylation is found at Asn125 and Asn190. The tract at residues 198 to 221 is disordered; the sequence is DSGEVKLDDEPPNSGGGSPCEAGE. Residues 213–256 enclose the EGF-like 1 domain; sequence GGSPCEAGEEGEGGVCLNGGVCSVVDDQAVCDCSRTGFRGKDCS. Cystine bridges form between Cys228/Cys243 and Cys245/Cys255. Laminin G-like domains follow at residues 283–473 and 480–672; these read IATF…AFKC and DPIT…KPSC. Ca(2+)-binding residues include Asp329, Leu346, and Met407. 5 disulfides stabilise this stretch: Cys437-Cys473, Cys643-Cys672, Cys680-Cys691, Cys685-Cys700, and Cys702-Cys712. Residues 676 to 713 form the EGF-like 2 domain; it reads TAKPCLSNPCKNNGMCRDGWNRYVCDCSGTGYLGRSCE. 2 Laminin G-like domains span residues 718-891 and 905-1080; these read VLSY…IDYC and DPVT…ERGC. Ca(2+) is bound by residues Asp765 and Leu782. N-linked (GlcNAc...) asparagine glycosylation is present at Asn790. Arg841 lines the Ca(2+) pocket. Disulfide bonds link Cys883-Cys891, Cys1052-Cys1080, Cys1087-Cys1098, Cys1092-Cys1107, and Cys1109-Cys1119. Positions 1083 to 1120 constitute an EGF-like 3 domain; that stretch reads PSTTCQEDSCSNQGVCLQQWDGFSCDCSMTSFSGPLCN. Residues 1126–1294 form the Laminin G-like 6 domain; that stretch reads YIFSKGGGQI…DANIAIVGNV (169 aa). Ca(2+) is bound by residues Asp1176 and Val1193. N-linked (GlcNAc...) asparagine glycosylation occurs at Asn1223. Ca(2+) is bound by residues Ile1245 and Asn1247. A disordered region spans residues 1325 to 1390; it reads TTTLATSTAR…AGGREPYPGS (66 aa). Ser1355 carries an O-linked (Xyl...) (heparan sulfate) serine glycan. The helical transmembrane segment at 1402–1422 threads the bilayer; it reads GMVVGIVAAAALCILILLYAM. Topologically, residues 1423–1477 are cytoplasmic; the sequence is YKYRNRDEGSYHVDESRNYISNSAQSNGAVVKEKQPSSAKSSNKNKKNKDKEYYV. The interaction with CASK stretch occupies residues 1444–1470; that stretch reads NSAQSNGAVVKEKQPSSAKSSNKNKKN. The disordered stretch occupies residues 1444–1477; sequence NSAQSNGAVVKEKQPSSAKSSNKNKKNKDKEYYV.

This sequence belongs to the neurexin family. Interacts (via laminin G-like domain 2 and/or laminin G-like domain 6) with NLGN1 forming a heterotetramer, where one NLGN1 dimer interacts with one NRXN1 dimer. Also interacts (via laminin G-like domain 2 and/or laminin G-like domain 6) with NLGN2, NLGN3 and NLGN4L; interactions with NLGN1, NLGN2, NLGN3 and NLGN4L are calcium-dependent. Interacts (via cytoplasmic C-terminal region) with CASK (via the PDZ, SH3 and guanylate kinase-like domains). Interacts (via cytoplasmic C-terminus) with CASKIN1 and APBA1. Interacts (via laminin G-like domain 2) with NXPH1 and NXPH3. Alpha-type isoforms (neurexin-1-alpha) interact (via laminin G-like domain 2 and/or laminin G-like domain 6) with DAG1 (via alpha-dystroglycan chain). Interacts with LRRTM1, LRRTM2, LRRTM3 and LRRTM4. Interacts with SYT13 and SYTL1. Interacts with CBLN1, CBLN2 and, less avidly, with CBLN4. Interacts with CLSTN3. Post-translationally, O-glycosylated; contains heparan sulfate. Heparan sulfate attachment is required for synapse development by mediating interactions with neuroligins and LRRTM2. Brain.

The protein localises to the presynaptic cell membrane. Functionally, cell surface protein involved in cell-cell-interactions, exocytosis of secretory granules and regulation of signal transmission. Function is isoform-specific. Alpha-type isoforms have a long N-terminus with six laminin G-like domains and play an important role in synaptic signal transmission. Alpha-type isoforms play a role in the regulation of calcium channel activity and Ca(2+)-triggered neurotransmitter release at synapses and at neuromuscular junctions. They play an important role in Ca(2+)-triggered exocytosis of secretory granules in pituitary gland. They may affect their functions at synapses and in endocrine cells via their interactions with proteins from the exocytotic machinery. Likewise, alpha-type isoforms play a role in regulating the activity of postsynaptic NMDA receptors, a subtype of glutamate-gated ion channels. Both alpha-type and beta-type isoforms may play a role in the formation or maintenance of synaptic junctions via their interactions (via the extracellular domains) with neuroligin family members, CBLN1 or CBLN2. In vitro, triggers the de novo formation of presynaptic structures. May be involved in specification of excitatory synapses. Alpha-type isoforms were first identified as receptors for alpha-latrotoxin from spider venom. The polypeptide is Neurexin-1 (NRXN1) (Homo sapiens (Human)).